A 402-amino-acid polypeptide reads, in one-letter code: Multidrug resistance protein MdtH (402 aa).

Residues 1 to 12 (MSRVSQARNLGK) are Cytoplasmic-facing. Residues 13-33 (YFLLIDNMLVVLGFFVVFPLI) form a helical membrane-spanning segment. The Periplasmic segment spans residues 34 to 98 (SIRFVDQMGW…GFATMGIAHE (65 aa)). A helical transmembrane segment spans residues 99–116 (PWLLWFSCFLSGLGGTLF). At 117–138 (DPPRSALVVKLIRPEQRGRFFS) the chain is on the cytoplasmic side. A helical transmembrane segment spans residues 139–159 (LLMMQDSAGAVIGALLGSWLL). Over 160–164 (QYDFR) the chain is Periplasmic. The chain crosses the membrane as a helical span at residues 165 to 185 (LVCATGAILFILCALFNAWLL). At 186–213 (PAWKLSTVRTPVREGMRRVMSDKRFVTY) the chain is on the cytoplasmic side. A helical transmembrane segment spans residues 214–234 (VLTLAGYYMLAVQVMLMLPIM). Topologically, residues 235–243 (VNDIAGSPA) are periplasmic. Residues 244–264 (AVKWMYAIEACLSLTLLYPIA) traverse the membrane as a helical segment. The Cytoplasmic portion of the chain corresponds to 265 to 276 (RWSEKRFRLEHR). A helical transmembrane segment spans residues 277–297 (LMAGLLVMSLSMIPIGMVGNL). Topologically, residues 298–299 (QQ) are periplasmic. Residues 300–320 (LFTLICAFYIGSVIAEPARET) traverse the membrane as a helical segment. Residues 321 to 339 (LSASLADARARGSYMGFSR) are Cytoplasmic-facing. The chain crosses the membrane as a helical span at residues 340–360 (LGLAIGGAIGYIGGGWLFDMG). The Periplasmic segment spans residues 361–367 (KALTQPE). Residues 368-388 (LPWMMLGIIGFITFLALGWQF) form a helical membrane-spanning segment. Residues 389 to 402 (SHKRTPRRMLEPGA) lie on the Cytoplasmic side of the membrane.

This sequence belongs to the major facilitator superfamily. DHA1 family. MdtH (TC 2.A.1.2.21) subfamily.

The protein resides in the cell inner membrane. The protein is Multidrug resistance protein MdtH of Salmonella paratyphi B (strain ATCC BAA-1250 / SPB7).